We begin with the raw amino-acid sequence, 432 residues long: MSYFFGSTVPFAEPLWYSRPENFRYNESHRRLRESVRGYIEAEIMPFCTQWEADGEVPSHVLKRHAALGYAAALINPSAVKEHMHDVRLPGDVPPREWDEFHGLIVADEVARCGSLGVLWALGCGTAIACPILVNYGTEEQKAKFLPPVIHGESRFCLGITEPEVGSDIANLVTRAEQEGNYFIVNGTKKWVTNGTFADYCIAAVRTGQAGRTGISLLNIPLDVAGVSREKIESSGVASGGTASITFDNVQVPVENLLGEKNKGFYMLMSSFDHHRSWIAANCLRLARVCLEDAYQYALTRQTFGKPLINHQTIRLKLANIGIQITSSYALLESLTEMRQNLSVKMGQVHRGIGGLCAITKVAAARTFELAVRESQQIMGASAYTRTGPGLRVERLSRDMRVLVIGGGSEEILSEMSVVQEQKDLNRCKSCP.

The protein belongs to the acyl-CoA dehydrogenase family. FAD serves as cofactor.

Its pathway is mycotoxin biosynthesis. Its function is as follows. Acyl-CoA dehydrogenase; part of the gene clusters that mediate the biosynthesis of the host-selective toxins (HSTs) AF-toxins responsible for Alternaria black spot of strawberry disease by the strawberry pathotype. AF-toxin I and III are valine derivatives of 2,3-dyhydroxy-isovaleric acid and 2-hydroxy-isovaleric acid respectively, while AF II is an isoleucine derivative of 2-hydroxy-valeric acid. These derivatives are bound to a 9,10-epoxy-8-hydroxy-9-methyl-decatrienoic acid (EDA) moiety. On cellular level, AF-toxins affect plasma membrane of susceptible cells and cause a sudden increase in loss of K(+) after a few minutes of toxin treatment. The aldo-keto reductase AFTS1 catalyzes the conversion of 2-keto-isovaleric acid (2-KIV) to 2-hydroxy-isovaleric acid (2-HIV) by reduction of its ketone to an alcohol. The acyl-CoA ligase AFT1, the hydrolase AFT2 and the enoyl-CoA hydratases AFT3 and AFT6, but also the polyketide synthase AFT9, the acyl-CoA dehydrogenase AFT10, the cytochrome P450 monooxygenase AFT11 and the oxidoreductase AFT12 are all involved in the biosynthesis of the AK-, AF- and ACT-toxin common EDA structural moiety. The exact function of each enzyme, and of additional enzymes identified within the AF-toxin clusters have still to be determined. The chain is Acyl-CoA dehydrogenase AFT10-1 from Alternaria alternata (Alternaria rot fungus).